Consider the following 536-residue polypeptide: Membrane protein insertase YidC (536 aa).

4 consecutive transmembrane segments (helical) span residues 5–25 (LIIA…IFPT), 353–373 (GNYG…FFPL), 418–438 (VNPL…FGLY), and 495–515 (MLML…GLVI).

The protein belongs to the OXA1/ALB3/YidC family. Type 1 subfamily. As to quaternary structure, interacts with the Sec translocase complex via SecD. Specifically interacts with transmembrane segments of nascent integral membrane proteins during membrane integration.

It is found in the cell inner membrane. Required for the insertion and/or proper folding and/or complex formation of integral membrane proteins into the membrane. Involved in integration of membrane proteins that insert both dependently and independently of the Sec translocase complex, as well as at least some lipoproteins. Aids folding of multispanning membrane proteins. The sequence is that of Membrane protein insertase YidC from Geobacter sp. (strain M21).